A 66-amino-acid chain; its full sequence is UPF0434 protein Jann_0424 (66 aa).

The protein belongs to the UPF0434 family.

In Jannaschia sp. (strain CCS1), this protein is UPF0434 protein Jann_0424.